Here is a 255-residue protein sequence, read N- to C-terminus: Endonuclease V (255 aa).

The Mg(2+) site is built by Asp-42 and Asp-110.

Belongs to the endonuclease V family. Mg(2+) serves as cofactor.

The protein resides in the cytoplasm. The enzyme catalyses Endonucleolytic cleavage at apurinic or apyrimidinic sites to products with a 5'-phosphate.. In terms of biological role, DNA repair enzyme involved in the repair of deaminated bases. Selectively cleaves double-stranded DNA at the second phosphodiester bond 3' to a deoxyinosine leaving behind the intact lesion on the nicked DNA. This is Endonuclease V from Aeropyrum pernix (strain ATCC 700893 / DSM 11879 / JCM 9820 / NBRC 100138 / K1).